We begin with the raw amino-acid sequence, 682 residues long: uncharacterized protein (682 aa).

The region spanning 284 to 487 (VVNILADRLI…KDKDIAEYIV (204 aa)) is the MCM domain. An ATP-binding site is contributed by 329-336 (TDPGIGKT).

The protein belongs to the MCM family.

This is an uncharacterized protein from Methanocaldococcus jannaschii (strain ATCC 43067 / DSM 2661 / JAL-1 / JCM 10045 / NBRC 100440) (Methanococcus jannaschii).